A 294-amino-acid chain; its full sequence is MALSLDGLPEKPAPAEAPSPPVGRRVQASLVFARGGRTTVLSRQVVPYPFHITRAFRMHPESPDLATLYLQSASGGLYAADHLTLAIAARAGARAHVTTQAGTVVHRGGPEPSRQETRLTIAADAFLALNPDPLILFPGAHLAVSTEITAEPGARAIVTESVACHDPVGEGRPFDRLDLGLTIRDPEGRALVRERSRIDGRAFTAPDSPMGPHRAYGTMVVLGAPDDARLAGLHLRQAADAAGCLTGVSPLPNGAGLGLRLLAPDGGTLSAGMDAVFRIVFETLSGCAPGRRRK.

The disordered stretch occupies residues 1-22 (MALSLDGLPEKPAPAEAPSPPV). Pro residues predominate over residues 11-21 (KPAPAEAPSPP).

The protein belongs to the UreD family. In terms of assembly, ureD, UreF and UreG form a complex that acts as a GTP-hydrolysis-dependent molecular chaperone, activating the urease apoprotein by helping to assemble the nickel containing metallocenter of UreC. The UreE protein probably delivers the nickel.

The protein resides in the cytoplasm. In terms of biological role, required for maturation of urease via the functional incorporation of the urease nickel metallocenter. This is Urease accessory protein UreD 1 from Methylorubrum extorquens (strain PA1) (Methylobacterium extorquens).